A 221-amino-acid chain; its full sequence is Immediate early response gene 2 protein (221 aa).

The residue at position 1 (M1) is an N-acetylmethionine. The segment at 105 to 155 (ETPALCDPPPARVSRKRRSSSDLSDGSDAGLVPSKKARLEEVEGEATSEVP) is disordered. Residues 125–136 (SDLSDGSDAGLV) show a composition bias toward low complexity.

It belongs to the IER family.

It is found in the cytoplasm. Its subcellular location is the nucleus. Its function is as follows. DNA-binding protein that seems to act as a transcription factor. Involved in the regulation of neuronal differentiation, acts upon JNK-signaling pathway activation and plays a role in neurite outgrowth in hippocampal cells. May mediate with FIBP FGF-signaling in the establishment of laterality in the embryo. Promotes cell motility, seems to stimulate tumor metastasis. In Mus musculus (Mouse), this protein is Immediate early response gene 2 protein (Ier2).